Here is a 230-residue protein sequence, read N- to C-terminus: Poxin (230 aa).

H43 acts as the Proton donor in catalysis. The active-site Shared with catalytic histidine of dimeric partner is the Y174. K178 serves as the catalytic Proton acceptor; shared with catalytic histidine of dimeric partner.

Belongs to the poxin family. As to quaternary structure, homodimer.

The catalysed reaction is 2',3'-cGAMP + H2O = Gp(2'-5')Ap(3') + H(+). Its function is as follows. Nuclease that cleaves host 2',3'-cGAMP. The protein is Poxin (P26) of Orgyia pseudotsugata multicapsid polyhedrosis virus (OpMNPV).